The sequence spans 248 residues: 5'-nucleotidase SurE (248 aa).

The a divalent metal cation site is built by D8, D9, S39, and N91.

Belongs to the SurE nucleotidase family. A divalent metal cation is required as a cofactor.

It is found in the cytoplasm. The catalysed reaction is a ribonucleoside 5'-phosphate + H2O = a ribonucleoside + phosphate. Nucleotidase that shows phosphatase activity on nucleoside 5'-monophosphates. This Neisseria gonorrhoeae (strain ATCC 700825 / FA 1090) protein is 5'-nucleotidase SurE.